Consider the following 208-residue polypeptide: Ribosome maturation factor RimP (208 aa).

Residues 165-208 (TAQPKKGQRQGKEPAKESGQKKQLAEAAPRSGSKRSERGSEKRK) are disordered. Composition is skewed to basic and acidic residues over residues 174–188 (QGKE…KKQL) and 198–208 (KRSERGSEKRK).

This sequence belongs to the RimP family.

The protein localises to the cytoplasm. Functionally, required for maturation of 30S ribosomal subunits. This chain is Ribosome maturation factor RimP, found in Sorangium cellulosum (strain So ce56) (Polyangium cellulosum (strain So ce56)).